The chain runs to 1088 residues: RNA-directed RNA polymerase (1088 aa).

The region spanning 501–687 (LSYGDVTRFL…AKRYIAGGKI (187 aa)) is the RdRp catalytic domain.

Belongs to the reoviridae RNA-directed RNA polymerase family. Interacts with VP3 (Potential). Interacts with VP2; this interaction activates VP1. Interacts with NSP5; this interaction is probably necessary for the formation of functional virus factories. Interacts with NSP2; this interaction is weak. It depends on Mg(2+) as a cofactor.

The protein localises to the virion. It catalyses the reaction RNA(n) + a ribonucleoside 5'-triphosphate = RNA(n+1) + diphosphate. Its function is as follows. RNA-directed RNA polymerase that is involved in both transcription and genome replication. Together with VP3 capping enzyme, forms an enzyme complex positioned near the channels situated at each of the five-fold vertices of the core. Following infection, the outermost layer of the virus is lost, leaving a double-layered particle (DLP) made up of the core and VP6 shell. VP1 then catalyzes the transcription of fully conservative plus-strand genomic RNAs that are extruded through the DLP's channels into the cytoplasm where they function as mRNAs for translation of viral proteins. One copy of each of the viral (+)RNAs is also recruited during core assembly, together with newly synthesized polymerase complexes and VP2. The polymerase of these novo-formed particles catalyzes the synthesis of complementary minus-strands leading to dsRNA formation. To do so, the polymerase specifically recognizes and binds 4 bases 5'-UGUG-3' in the conserved 3'-sequence of plus-strand RNA templates. VP2 presumably activates the autoinhibited VP1-RNA complex to coordinate packaging and genome replication. Once dsRNA synthesis is complete, the polymerase switches to the transcriptional mode, thus providing secondary transcription. The chain is RNA-directed RNA polymerase from Rotavirus A (strain RVA/SA11-Patton/G3P[X]) (RV-A).